We begin with the raw amino-acid sequence, 332 residues long: Nucleoid-associated protein VIBHAR_03026 (332 aa).

It belongs to the YejK family.

It localises to the cytoplasm. Its subcellular location is the nucleoid. The chain is Nucleoid-associated protein VIBHAR_03026 from Vibrio campbellii (strain ATCC BAA-1116).